The primary structure comprises 345 residues: Serine/threonine-protein kinase US3 homolog (345 aa).

Positions 49–334 constitute a Protein kinase domain; it reads FSVLETFTPG…KALLDFAAFY (286 aa). ATP is bound by residues 55–63 and Lys-78; that span reads FTPGAEGFT. Residue Asp-162 is the Proton acceptor of the active site.

This sequence belongs to the protein kinase superfamily. Ser/Thr protein kinase family. In terms of processing, phosphorylated by UL13 homolog; this phosphorylation regulates subsequent phosphorylation of UL31 and UL34 homologs by US3. Autophosphorylated.

Its subcellular location is the host cytoplasm. It is found in the host nucleus. The enzyme catalyses L-seryl-[protein] + ATP = O-phospho-L-seryl-[protein] + ADP + H(+). The catalysed reaction is L-threonyl-[protein] + ATP = O-phospho-L-threonyl-[protein] + ADP + H(+). In terms of biological role, multifunctional serine/threonine kinase that plays a role in several processes including egress of virus particles from the nucleus, modulation of the actin cytoskeleton and inhibition of apoptosis. Phosphorylates UL31 and UL34 homologs, two critical regulators of capsid budding from nucleus to endoplasmic reticulum, thereby facilitating virion egress. Modulates and redistributes host components of the nuclear envelope, including LMNA, emerin/EMD and the nuclear matrix protein MATR3. Phosphorylates envelope glycoprotein B (gB), probably to direct it to the cell surface. Promotes virus intracellular spread by restructuring host cell cytoskeleton. Blocks host apoptosis to extend cell survival and allow efficient viral replication. Promotes viral gene expression by phosphorylating host HDAC2 to reduce viral genome silencing. This Chlorocebus aethiops (Green monkey) protein is Serine/threonine-protein kinase US3 homolog (US2).